A 487-amino-acid polypeptide reads, in one-letter code: Probable cytochrome P450 516A1 (487 aa).

A helical membrane pass occupies residues 1–21 (MIILLLSIIIFILYIVKIFKN). Cys-434 provides a ligand contact to heme.

Belongs to the cytochrome P450 family. The cofactor is heme.

Its subcellular location is the membrane. The polypeptide is Probable cytochrome P450 516A1 (cyp516A1) (Dictyostelium discoideum (Social amoeba)).